The chain runs to 101 residues: NADH-quinone oxidoreductase subunit K (101 aa).

The next 3 helical transmembrane spans lie at leucine 4–leucine 24, isoleucine 29–alanine 49, and isoleucine 61–leucine 81.

Belongs to the complex I subunit 4L family. NDH-1 is composed of 14 different subunits. Subunits NuoA, H, J, K, L, M, N constitute the membrane sector of the complex.

The protein localises to the cell inner membrane. It carries out the reaction a quinone + NADH + 5 H(+)(in) = a quinol + NAD(+) + 4 H(+)(out). Functionally, NDH-1 shuttles electrons from NADH, via FMN and iron-sulfur (Fe-S) centers, to quinones in the respiratory chain. The immediate electron acceptor for the enzyme in this species is believed to be ubiquinone. Couples the redox reaction to proton translocation (for every two electrons transferred, four hydrogen ions are translocated across the cytoplasmic membrane), and thus conserves the redox energy in a proton gradient. The sequence is that of NADH-quinone oxidoreductase subunit K from Burkholderia vietnamiensis (strain G4 / LMG 22486) (Burkholderia cepacia (strain R1808)).